The primary structure comprises 611 residues: Dihydroxy-acid dehydratase (611 aa).

Asp82 lines the Mg(2+) pocket. Residue Cys123 participates in [2Fe-2S] cluster binding. Mg(2+)-binding residues include Asp124 and Lys125. N6-carboxylysine is present on Lys125. Cys192 contacts [2Fe-2S] cluster. Position 489 (Glu489) interacts with Mg(2+). The Proton acceptor role is filled by Ser515. A compositionally biased stretch (basic and acidic residues) spans 565–574 (ERRKAEEARG). The interval 565–586 (ERRKAEEARGKKAFTPPTRQRE) is disordered.

Belongs to the IlvD/Edd family. Homodimer. [2Fe-2S] cluster is required as a cofactor. The cofactor is Mg(2+).

The catalysed reaction is (2R)-2,3-dihydroxy-3-methylbutanoate = 3-methyl-2-oxobutanoate + H2O. It carries out the reaction (2R,3R)-2,3-dihydroxy-3-methylpentanoate = (S)-3-methyl-2-oxopentanoate + H2O. It functions in the pathway amino-acid biosynthesis; L-isoleucine biosynthesis; L-isoleucine from 2-oxobutanoate: step 3/4. It participates in amino-acid biosynthesis; L-valine biosynthesis; L-valine from pyruvate: step 3/4. Functions in the biosynthesis of branched-chain amino acids. Catalyzes the dehydration of (2R,3R)-2,3-dihydroxy-3-methylpentanoate (2,3-dihydroxy-3-methylvalerate) into 2-oxo-3-methylpentanoate (2-oxo-3-methylvalerate) and of (2R)-2,3-dihydroxy-3-methylbutanoate (2,3-dihydroxyisovalerate) into 2-oxo-3-methylbutanoate (2-oxoisovalerate), the penultimate precursor to L-isoleucine and L-valine, respectively. This chain is Dihydroxy-acid dehydratase, found in Parabacteroides distasonis (strain ATCC 8503 / DSM 20701 / CIP 104284 / JCM 5825 / NCTC 11152).